The following is a 457-amino-acid chain: Cysteine--tRNA ligase (457 aa).

Position 29 (Cys29) interacts with Zn(2+). The short motif at Pro31–Asn41 is the 'HIGH' region element. The Zn(2+) site is built by Cys214, His239, and Glu243. Positions Lys272–Ser276 match the 'KMSKS' region motif. Position 275 (Lys275) interacts with ATP.

This sequence belongs to the class-I aminoacyl-tRNA synthetase family. Monomer. The cofactor is Zn(2+).

The protein resides in the cytoplasm. The enzyme catalyses tRNA(Cys) + L-cysteine + ATP = L-cysteinyl-tRNA(Cys) + AMP + diphosphate. This chain is Cysteine--tRNA ligase (cysS), found in Rickettsia prowazekii (strain Madrid E).